A 217-amino-acid polypeptide reads, in one-letter code: Cytidylate kinase (217 aa).

Position 10-18 (10-18 (GPAGAGKST)) interacts with ATP.

Belongs to the cytidylate kinase family. Type 1 subfamily.

The protein localises to the cytoplasm. The catalysed reaction is CMP + ATP = CDP + ADP. The enzyme catalyses dCMP + ATP = dCDP + ADP. This chain is Cytidylate kinase, found in Clostridium botulinum (strain ATCC 19397 / Type A).